Consider the following 121-residue polypeptide: Apoptin (121 aa).

Disordered stretches follow at residues 1–28 (MNAL…LETP) and 57–121 (LRSA…CIRL). Positions 58-70 (RSATADNSESTGF) are enriched in polar residues. The segment covering 88–102 (RSCDPSEYRVSELKE) has biased composition (basic and acidic residues).

This sequence belongs to the gyrovirus apoptin family.

It is found in the host nucleus. May act as transcriptional regulator. Induces apoptosis in infected cells. Element of infectious replication cycle. The chain is Apoptin (VP3) from Gallus gallus (Chicken).